A 111-amino-acid polypeptide reads, in one-letter code: UPF0145 protein BRADO6695 (111 aa).

The protein belongs to the UPF0145 family.

The chain is UPF0145 protein BRADO6695 from Bradyrhizobium sp. (strain ORS 278).